We begin with the raw amino-acid sequence, 64 residues long: Large ribosomal subunit protein bL35 (64 aa).

Belongs to the bacterial ribosomal protein bL35 family.

The polypeptide is Large ribosomal subunit protein bL35 (Helicobacter hepaticus (strain ATCC 51449 / 3B1)).